Here is a 350-residue protein sequence, read N- to C-terminus: Uroporphyrinogen decarboxylase (350 aa).

Residues 28–32, Asp78, Tyr155, Ser210, and His325 each bind substrate; that span reads RQAGR.

This sequence belongs to the uroporphyrinogen decarboxylase family. Homodimer.

The protein localises to the cytoplasm. The enzyme catalyses uroporphyrinogen III + 4 H(+) = coproporphyrinogen III + 4 CO2. The protein operates within porphyrin-containing compound metabolism; protoporphyrin-IX biosynthesis; coproporphyrinogen-III from 5-aminolevulinate: step 4/4. Its function is as follows. Catalyzes the decarboxylation of four acetate groups of uroporphyrinogen-III to yield coproporphyrinogen-III. The protein is Uroporphyrinogen decarboxylase of Trichormus variabilis (strain ATCC 29413 / PCC 7937) (Anabaena variabilis).